Here is a 160-residue protein sequence, read N- to C-terminus: SsrA-binding protein (160 aa).

This sequence belongs to the SmpB family.

The protein resides in the cytoplasm. Its function is as follows. Required for rescue of stalled ribosomes mediated by trans-translation. Binds to transfer-messenger RNA (tmRNA), required for stable association of tmRNA with ribosomes. tmRNA and SmpB together mimic tRNA shape, replacing the anticodon stem-loop with SmpB. tmRNA is encoded by the ssrA gene; the 2 termini fold to resemble tRNA(Ala) and it encodes a 'tag peptide', a short internal open reading frame. During trans-translation Ala-aminoacylated tmRNA acts like a tRNA, entering the A-site of stalled ribosomes, displacing the stalled mRNA. The ribosome then switches to translate the ORF on the tmRNA; the nascent peptide is terminated with the 'tag peptide' encoded by the tmRNA and targeted for degradation. The ribosome is freed to recommence translation, which seems to be the essential function of trans-translation. The protein is SsrA-binding protein of Klebsiella pneumoniae (strain 342).